The primary structure comprises 895 residues: Androgen receptor (895 aa).

The tract at residues 1-533 (MEVQLGLGRV…PIDYYFPPQK (533 aa)) is modulating. The tract at residues 1-562 (MEVQLGLGRV…GSCKVFFKRA (562 aa)) is interaction with ZNF318. Disordered stretches follow at residues 33–150 (VIQN…LSLL) and 175–211 (QLLQ…YLGG). 2 stretches are compositionally biased toward low complexity: residues 44-81 (AASA…GSPQ) and 175-200 (QLLQ…ASGA). S65 is subject to Phosphoserine; by CDK9. At S79 the chain carries Phosphoserine. The span at 201 to 211 (PTSSKDNYLGG) shows a compositional bias: polar residues. Position 208 is a phosphotyrosine; by CSK (Y208). S241 bears the Phosphoserine mark. Residue Y252 is modified to Phosphotyrosine; by CSK and TNK2. Y292, Y331, Y342, and Y347 each carry phosphotyrosine; by CSK. A Phosphotyrosine; by CSK and TNK2 modification is found at Y348. K371 participates in a covalent cross-link: Glycyl lysine isopeptide (Lys-Gly) (interchain with G-Cter in SUMO). A Phosphotyrosine; by CSK modification is found at Y378. Residue K496 forms a Glycyl lysine isopeptide (Lys-Gly) (interchain with G-Cter in SUMO) linkage. Phosphotyrosine; by CSK occurs at positions 510 and 527. Residues 527 to 894 (YYFPPQKTCL…GKVKPIYFHT (368 aa)) form an interaction with LPXN region. Residues 534–607 (TCLICGDEAS…AGMTLGARKL (74 aa)) constitute a DNA-binding region (nuclear receptor). 2 consecutive NR C4-type zinc fingers follow at residues 535–555 (CLIC…CGSC) and 571–595 (CASR…LRKC). The tract at residues 547-637 (YGALTCGSCK…TEETAQKLTV (91 aa)) is interaction with HIPK3. The interaction with CCAR1 stretch occupies residues 567–894 (QKYLCASRND…GKVKPIYFHT (328 aa)). The segment at 600–894 (MTLGARKLKK…GKVKPIYFHT (295 aa)) is interaction with KAT7. Phosphoserine; by STK4/MST1 is present on S626. In terms of domain architecture, NR LBD spans 644–875 (ECQPIFLNVL…DFPEMMAEII (232 aa)). Positions 681 and 728 each coordinate 17beta-hydroxy-5alpha-androstan-3-one. Residues K821 and K823 each participate in a glycyl lysine isopeptide (Lys-Gly) (interchain with G-Cter in ubiquitin) cross-link. 17beta-hydroxy-5alpha-androstan-3-one is bound at residue T853. Y891 bears the Phosphotyrosine; by CSK mark.

It belongs to the nuclear hormone receptor family. NR3 subfamily. As to quaternary structure, binds DNA as a homodimer. Part of a ternary complex containing AR, EFCAB6/DJBP and PARK7. Interacts with HIPK3 and NR0B2 in the presence of androgen. The ligand binding domain interacts with KAT7/HBO1 in the presence of dihydrotestosterone. Interacts with EFCAB6/DJBP, PQBP1, RANBP9, RBAK, SPDEF, SRA1, TGFB1I1 and RREB1. Interacts with ZMIZ1/ZIMP10 and ZMIZ2/ZMIP7 which both enhance its transactivation activity. Interacts with SLC30A9 and RAD54L2/ARIP4. Interacts with MACROD1 (via macro domain). Interacts via the ligand-binding domain with LXXLL and FXXLF motifs from NCOA1, NCOA2, NCOA3 and MAGEA11. Interacts (via nuclear receptor DNA binding domain and nuclear receptor ligand binding domain) with NCOA4. The AR N-terminal poly-Gln region binds Ran resulting in enhancement of AR-mediated transactivation. Ran-binding decreases as the poly-Gln length increases. Interacts with HIP1 (via coiled coil domain). Interacts (via ligand-binding domain) with TRIM68. Interacts with TNK2. Interacts with USP26. Interacts with RNF6. Interacts (regulated by RNF6 probably through polyubiquitination) with RNF14; regulates AR transcriptional activity. Interacts with PRMT2 and TRIM24. Interacts with RACK1. Interacts with RANBP10; this interaction enhances dihydrotestosterone-induced AR transcriptional activity. Interacts with PRPF6 in a hormone-independent way; this interaction enhances dihydrotestosterone-induced AR transcriptional activity. Interacts with STK4/MST1. Interacts with ZIPK/DAPK3. Interacts with LPXN. Interacts with MAK. Part of a complex containing AR, MAK and NCOA3. Interacts with CRY1. Interacts with CCAR1 and GATA2. Interacts with ZNF318. Interacts with BUD31. Interacts with ARID4A. Interacts with ARID4B. Interacts (via NR LBD domain) with ZBTB7A; the interaction is direct and androgen-dependent. Interacts with NCOR1. Interacts with NCOR2. Interacts with CRY2 in a ligand-dependent manner. Post-translationally, phosphorylated in prostate cancer cells in response to several growth factors including EGF. Phosphorylation is induced by c-Src kinase (CSK). Tyr-510 is one of the major phosphorylation sites and an increase in phosphorylation and Src kinase activity is associated with prostate cancer progression. Phosphorylation by TNK2 enhances the DNA-binding and transcriptional activity. Phosphorylation at Ser-65 by CDK9 regulates AR promoter selectivity and cell growth. In terms of processing, sumoylated on Lys-371 (major) and Lys-496. Ubiquitinated. Deubiquitinated by USP26. 'Lys-6' and 'Lys-27'-linked polyubiquitination by RNF6 modulates AR transcriptional activity and specificity. Palmitoylated by ZDHHC7 and ZDHHC21. Palmitoylation is required for plasma membrane targeting and for rapid intracellular signaling via ERK and AKT kinases and cAMP generation.

The protein resides in the nucleus. The protein localises to the cytoplasm. Steroid hormone receptors are ligand-activated transcription factors that regulate eukaryotic gene expression and affect cellular proliferation and differentiation in target tissues. Transcription factor activity is modulated by bound coactivator and corepressor proteins like ZBTB7A that recruits NCOR1 and NCOR2 to the androgen response elements/ARE on target genes, negatively regulating androgen receptor signaling and androgen-induced cell proliferation. Transcription activation is also down-regulated by NR0B2. Activated, but not phosphorylated, by HIPK3 and ZIPK/DAPK3. The polypeptide is Androgen receptor (AR) (Macaca fascicularis (Crab-eating macaque)).